The primary structure comprises 310 residues: N-acetyl-gamma-glutamyl-phosphate reductase (310 aa).

Cys-117 is an active-site residue.

The protein belongs to the NAGSA dehydrogenase family. Type 2 subfamily.

It localises to the cytoplasm. It catalyses the reaction N-acetyl-L-glutamate 5-semialdehyde + phosphate + NADP(+) = N-acetyl-L-glutamyl 5-phosphate + NADPH + H(+). It functions in the pathway amino-acid biosynthesis; L-arginine biosynthesis; N(2)-acetyl-L-ornithine from L-glutamate: step 3/4. Its function is as follows. Catalyzes the NADPH-dependent reduction of N-acetyl-5-glutamyl phosphate to yield N-acetyl-L-glutamate 5-semialdehyde. This chain is N-acetyl-gamma-glutamyl-phosphate reductase, found in Rhizobium etli (strain CIAT 652).